The chain runs to 286 residues: Short-chain dehydrogenase fogD (286 aa).

Val8, Thr34, Asp55, Tyr147, Lys151, Val180, and Thr182 together coordinate NADP(+). Tyr147 (proton acceptor) is an active-site residue. The active-site Lowers pKa of active site Tyr is Lys151.

It belongs to the short-chain dehydrogenases/reductases (SDR) family.

Its pathway is secondary metabolite biosynthesis. Its function is as follows. Short-chain dehydrogenase; part of the gene cluster that mediates the biosynthesis of flavoglaucin and congeners (including aspergin, dihydroauroglaucin and auroglaucin), prenylated salicylaldehyde derivatives carrying a saturated or an unsaturated C-7 side chain. The PKS fogA releases the carboxylic acid (8E,10E,12E)-3,5,7-trihydroxytetradeca-8,10,12-trienoic acid as its product, as well as derivatives with one and two double bonds. FogA is indeed able to reduce the initial triketide, thus being at least partially responsible for the differently saturated heptyl side chains of flavoglaucin congeners. The oxidoreductases fogB, fogC and fogD modify the nascent polyketide in fogA-bound form and, together, fogA, fogB, fogC and fogD are necessary for the formation of the aromatic core and the cyclized PKS products are released as salicyl alcohols. In particular, fogB is responsible for oxidation of a hydroxyl group or reduction of remaining double bond(s) at the C-7 residue whereas fogD is probably involved in the reductive release of the modified PKS products. The cytochrome P450 monooxygenase fogE is then responsible for the hydroxylation at C-3 of the benzene ring. The fogE products are substrates of the prenyltransferase fogH and the prenylated benzyl alcohols are subsequently oxidized by the fogF to produce the final aryl aldehydes flavoglaucin and congeners. The short-chain dehydrogenase fogG does not seem to be involved in the biosynthesis of the prenylated salicylaldehyde derivatives. The protein is Short-chain dehydrogenase fogD of Aspergillus ruber (strain CBS 135680).